A 192-amino-acid polypeptide reads, in one-letter code: Xanthine phosphoribosyltransferase (192 aa).

Xanthine-binding residues include L20 and N27. Residue 128–132 (ANGQA) coordinates 5-phospho-alpha-D-ribose 1-diphosphate. Position 156 (K156) interacts with xanthine.

Belongs to the purine/pyrimidine phosphoribosyltransferase family. Xpt subfamily. In terms of assembly, homodimer.

The protein resides in the cytoplasm. The enzyme catalyses XMP + diphosphate = xanthine + 5-phospho-alpha-D-ribose 1-diphosphate. The protein operates within purine metabolism; XMP biosynthesis via salvage pathway; XMP from xanthine: step 1/1. Converts the preformed base xanthine, a product of nucleic acid breakdown, to xanthosine 5'-monophosphate (XMP), so it can be reused for RNA or DNA synthesis. This Listeria monocytogenes serotype 4b (strain F2365) protein is Xanthine phosphoribosyltransferase.